Reading from the N-terminus, the 124-residue chain is Large ribosomal subunit protein uL22 (124 aa).

The protein belongs to the universal ribosomal protein uL22 family. In terms of assembly, part of the 50S ribosomal subunit.

Functionally, this protein binds specifically to 23S rRNA; its binding is stimulated by other ribosomal proteins, e.g. L4, L17, and L20. It is important during the early stages of 50S assembly. It makes multiple contacts with different domains of the 23S rRNA in the assembled 50S subunit and ribosome. In terms of biological role, the globular domain of the protein is located near the polypeptide exit tunnel on the outside of the subunit, while an extended beta-hairpin is found that lines the wall of the exit tunnel in the center of the 70S ribosome. This chain is Large ribosomal subunit protein uL22, found in Treponema pallidum (strain Nichols).